We begin with the raw amino-acid sequence, 323 residues long: Formyl peptide receptor-related sequence 4 (323 aa).

The Extracellular portion of the chain corresponds to 1-29; that stretch reads MEVNISMPLNGSEVVFYDSTTSRVLWILS. Asn4 and Asn10 each carry an N-linked (GlcNAc...) asparagine glycan. The helical transmembrane segment at 30-50 threads the bilayer; that stretch reads LVVLFITFVLGVLGNGLVIWV. Residues 51–66 are Cytoplasmic-facing; that stretch reads AGFQMAHTVTTVSYLN. A helical membrane pass occupies residues 67 to 87; that stretch reads LALSDLSFMATLPLHIISMVM. Topologically, residues 88–99 are extracellular; that stretch reads RGKWLFGWFLCK. The cysteines at positions 98 and 176 are disulfide-linked. A helical membrane pass occupies residues 100 to 120; the sequence is LVHIIANINLFVSIFLITLIA. At 121 to 144 the chain is on the cytoplasmic side; the sequence is MDRCICVLCPVWSQNHRTVSLARK. A helical membrane pass occupies residues 145-165; sequence VVLGAWIFALLLTLPHFLFLT. Over 166–202 the chain is Extracellular; that stretch reads TVRDARGDVYCISKFESWVATSEEQLKVSVIAATASG. The helical transmembrane segment at 203-223 threads the bilayer; the sequence is IINFIIGFSMPMSFIAICYGL. The Cytoplasmic segment spans residues 224-241; that stretch reads MAAKICRRGFVNSSRPLR. The helical transmembrane segment at 242–262 threads the bilayer; sequence VLTAVAVSFFVCWFPFQLIML. The Extracellular segment spans residues 263–280; it reads LGNIFNNETLSIIHMLVN. Asn269 is a glycosylation site (N-linked (GlcNAc...) asparagine). The helical transmembrane segment at 281-301 threads the bilayer; the sequence is PANTLASFNSCLNPILYVFLG. Topologically, residues 302-323 are cytoplasmic; the sequence is QEFRDRLIYSLYASLERALRED.

Belongs to the G-protein coupled receptor 1 family. As to expression, expressed in 0.6 % of a subset of sensory neurons located in the apical layer of the vomeronasal organ. Each neuron appears to express only one receptor gene.

Its subcellular location is the cell membrane. In terms of biological role, may have an olfactory function associated with the identification of pathogens or of pathogenic states. In Mus musculus (Mouse), this protein is Formyl peptide receptor-related sequence 4 (Fpr-rs4).